The primary structure comprises 167 residues: Kininogen-1 (167 aa).

The signal sequence occupies residues 1 to 23; that stretch reads MRLWFCLSFFIILCLEHFPGTLA.

It belongs to the bradykinin-related peptide family. Expressed by the skin glands.

The protein resides in the secreted. In terms of biological role, vasodilator. Bradykinin produces in vitro relaxation of rat arterial smooth muscle and constriction of intestinal smooth muscle. May target bradykinin receptors (BDKRB). This Bombina orientalis (Oriental fire-bellied toad) protein is Kininogen-1.